Here is a 793-residue protein sequence, read N- to C-terminus: Acetyl-CoA decarbonylase/synthase complex subunit alpha (793 aa).

[4Fe-4S] cluster contacts are provided by Cys-55, Cys-58, Cys-63, and Cys-73. His-96 provides a ligand contact to CO. His-229, Cys-257, and Cys-309 together coordinate [Ni-4Fe-4S] cluster. 4Fe-4S ferredoxin-type domains are found at residues 393-422 (EQQF…ISEM) and 432-461 (EPFS…LKLY). [4Fe-4S] cluster contacts are provided by Cys-403, Cys-406, Cys-409, Cys-413, Cys-441, Cys-444, Cys-447, and Cys-451. Residues Cys-509, Cys-538, and Cys-573 each contribute to the [Ni-4Fe-4S] cluster site.

This sequence belongs to the Ni-containing carbon monoxide dehydrogenase family. Heterotetramer of two alpha and two epsilon subunits. The ACDS complex is made up of alpha, epsilon, beta, gamma and delta subunits with a probable stoichiometry of (alpha(2)epsilon(2))(4)-beta(8)-(gamma(1)delta(1))(8). The cofactor is [4Fe-4S] cluster. [Ni-4Fe-4S] cluster serves as cofactor.

It catalyses the reaction CO + 2 oxidized [2Fe-2S]-[ferredoxin] + H2O = 2 reduced [2Fe-2S]-[ferredoxin] + CO2 + 2 H(+). Functionally, part of the ACDS complex that catalyzes the reversible cleavage of acetyl-CoA, allowing autotrophic growth from CO(2). The alpha-epsilon subcomponent functions as a carbon monoxide dehydrogenase. The polypeptide is Acetyl-CoA decarbonylase/synthase complex subunit alpha (Methanothrix soehngenii (Methanosaeta concilii)).